A 1021-amino-acid chain; its full sequence is 2-oxoglutarate dehydrogenase complex component E1 (1021 aa).

A mitochondrion-targeting transit peptide spans 1-40; it reads MFNLRTCASKLRPLTASQTIRSLKHNRPAAPRTFQQFRCL. Histidine 142, aspartate 155, and aspartate 157 together coordinate Ca(2+). Arginine 311, aspartate 410, asparagine 443, and isoleucine 445 together coordinate thiamine diphosphate. Positions 410, 443, and 445 each coordinate Mg(2+). A Glycyl lysine isopeptide (Lys-Gly) (interchain with G-Cter in ubiquitin) cross-link involves residue lysine 533. Glutamine 675 contacts thiamine diphosphate.

Belongs to the alpha-ketoglutarate dehydrogenase family. Homodimer. The 2-oxoglutarate dehydrogenase complex is composed of OGDH (2-oxoglutarate dehydrogenase; E1), DLST (dihydrolipoamide succinyltransferase; E2) and DLD (dihydrolipoamide dehydrogenase; E3). It contains multiple copies of the three enzymatic components (E1, E2 and E3). In the nucleus, the 2-oxoglutarate dehydrogenase complex associates with kat2a. The cofactor is thiamine diphosphate. Mg(2+) serves as cofactor. As to expression, expressed in the brain.

It localises to the mitochondrion. Its subcellular location is the nucleus. The enzyme catalyses N(6)-[(R)-lipoyl]-L-lysyl-[protein] + 2-oxoglutarate + H(+) = N(6)-[(R)-S(8)-succinyldihydrolipoyl]-L-lysyl-[protein] + CO2. Calcium ions and ADP stimulate, whereas ATP and NADH reduce catalytic activity. 2-oxoglutarate dehydrogenase (E1o) component of the 2-oxoglutarate dehydrogenase complex (OGDHC). Participates in the first step, rate limiting for the overall conversion of 2-oxoglutarate to succinyl-CoA and CO(2) catalyzed by the whole OGDHC. Catalyzes the irreversible decarboxylation of 2-oxoglutarate (alpha-ketoglutarate) via the thiamine diphosphate (ThDP) cofactor and subsequent transfer of the decarboxylated acyl intermediate on an oxidized dihydrolipoyl group that is covalently amidated to the E2 enzyme (dihydrolipoyllysine-residue succinyltransferase or DLST). Plays a key role in the Krebs (citric acid) cycle, which is a common pathway for oxidation of fuel molecules, including carbohydrates, fatty acids, and amino acids. Can catalyze the decarboxylation of 2-oxoadipate in vitro, but at a much lower rate than 2-oxoglutarate. Mainly active in the mitochondrion. A fraction of the 2-oxoglutarate dehydrogenase complex also localizes in the nucleus and is required for lysine succinylation of histones: associates with KAT2A on chromatin and provides succinyl-CoA to histone succinyltransferase KAT2A. The chain is 2-oxoglutarate dehydrogenase complex component E1 (ogdh) from Xenopus laevis (African clawed frog).